Here is an 803-residue protein sequence, read N- to C-terminus: Translation initiation factor IF-2 (803 aa).

Residues Pro-65–Thr-75 show a composition bias toward basic and acidic residues. The disordered stretch occupies residues Pro-65 to Lys-186. The span at Asn-175–Leu-185 shows a compositional bias: basic residues. Positions Ile-300–Glu-468 constitute a tr-type G domain. A G1 region spans residues Gly-309–Thr-316. A GTP-binding site is contributed by Gly-309–Thr-316. Residues Gly-334–His-338 form a G2 region. A G3 region spans residues Asp-355–Gly-358. GTP is bound by residues Asp-355 to His-359 and Asn-409 to Asp-412. The tract at residues Asn-409 to Asp-412 is G4. The tract at residues Ser-445–Lys-447 is G5.

It belongs to the TRAFAC class translation factor GTPase superfamily. Classic translation factor GTPase family. IF-2 subfamily.

Its subcellular location is the cytoplasm. In terms of biological role, one of the essential components for the initiation of protein synthesis. Protects formylmethionyl-tRNA from spontaneous hydrolysis and promotes its binding to the 30S ribosomal subunits. Also involved in the hydrolysis of GTP during the formation of the 70S ribosomal complex. This chain is Translation initiation factor IF-2, found in Tropheryma whipplei (strain TW08/27) (Whipple's bacillus).